The chain runs to 351 residues: Protein MSS2, mitochondrial (351 aa).

2 TPR repeats span residues 155–188 (HLTVKLIGDLFFENKTYDKAEKYYQEFLKLENST) and 260–294 (KECFKTLGFLELNYFNNYERAKEWFKTGMEIMDLE).

In terms of assembly, interacts with COX18.

It is found in the mitochondrion inner membrane. Required to stabilize mitochondrial cytochrome C oxidase subunit 2 (COX2) and to translocate the C-terminal domain of COX2 through the inner membrane. The sequence is that of Protein MSS2, mitochondrial (MSS2) from Saccharomyces cerevisiae (strain ATCC 204508 / S288c) (Baker's yeast).